A 139-amino-acid polypeptide reads, in one-letter code: Cytochrome c-type biogenesis protein CcmE (139 aa).

At 1–7 (MTKRQNR) the chain is on the cytoplasmic side. Residues 8–28 (MTLVALLVIGVSLTGYLGLKA) traverse the membrane as a helical; Signal-anchor for type II membrane protein segment. The Periplasmic portion of the chain corresponds to 29–139 (FNENLLYFFS…ADALEKAKNK (111 aa)). Heme is bound by residues histidine 120 and tyrosine 124.

This sequence belongs to the CcmE/CycJ family.

It is found in the cell inner membrane. Heme chaperone required for the biogenesis of c-type cytochromes. Transiently binds heme delivered by CcmC and transfers the heme to apo-cytochromes in a process facilitated by CcmF and CcmH. This Ruthia magnifica subsp. Calyptogena magnifica protein is Cytochrome c-type biogenesis protein CcmE.